The sequence spans 194 residues: Ribonuclease HII (194 aa).

Residues 3-193 (ILTAGVDEAG…VRNLLAQQAL (191 aa)) enclose the RNase H type-2 domain. A divalent metal cation-binding residues include D9, E10, and D101.

It belongs to the RNase HII family. Mn(2+) is required as a cofactor. Requires Mg(2+) as cofactor.

It is found in the cytoplasm. The enzyme catalyses Endonucleolytic cleavage to 5'-phosphomonoester.. Functionally, endonuclease that specifically degrades the RNA of RNA-DNA hybrids. In Neisseria gonorrhoeae (strain ATCC 700825 / FA 1090), this protein is Ribonuclease HII.